The sequence spans 930 residues: F-box only protein 11 (930 aa).

The segment at 1–150 (MNSVRAANRR…RVSGKSQDLS (150 aa)) is disordered. A compositionally biased stretch (basic residues) spans 7–16 (ANRRPRRVSR). Residues 17–27 (PRPVQQQQQQP) are compositionally biased toward low complexity. Positions 28–73 (PQQPPPQPPQQQPPPQPPQQPPQQQPPPPPQQQPPPPPPPPPPPPQ) are enriched in pro residues. Over residues 117–132 (PTKSSMEGASTSTTEN) the composition is skewed to polar residues. One can recognise an F-box domain in the interval 156–202 (QYLQEKLPDEVVLKIFSYLLEQDLCRAACVCKRFSELANDPILWKRL). PbH1 repeat units follow at residues 398-420 (GACPTIKHCNISDCENVGLYITD), 421-443 (HAQGIYEDNEISNNALAGIWVKN), 444-466 (HGNPIIRRNHIHHGRDVGVFTFD), 467-489 (HGMGYFESCNIHRNRIAGFEVKA), 490-512 (YANPTVVRCEIHHGQTGGIYVHE), 513-535 (KGRGQFIENKIYANNFAGVWITS), 536-558 (NSDPTIRGNSIFNGNQGGVYIFG), 559-581 (DGRGLIEGNDIYGNALAGIQIRT), 582-604 (NSCPIVRHNKIHDGQHGGIYVHE), 605-627 (KGQGVIEENEVYSNTLAGVWVTT), 628-650 (GSTPVLRRNRIHSGKQVGVYFYD), 651-673 (NGHGVLEDNDIYNHMYSGVQIRT), 674-696 (GSNPKIRRNKIWGGQNGGILVYN), 697-719 (SGLGCIEDNEIFDNAMAGVWIKT), 720-742 (DSNPTLRRNKIHDGRDGGICIFN), 743-765 (GGRGLLEENDIFRNAQAGVLIST), 766-788 (NSHPVLRKNRIFDGFAAGIEITN), 789-811 (HATATLEGNQIFNNRFGGLFLAS), and 812-833 (GVNVTMKDNKIMNNQDAIEKAV). The UBR-type zinc finger occupies 836-907 (GQCLYKISSY…LSNPCTLAGE (72 aa)).

In terms of assembly, component of the SCF(FBXO11) complex consisting of CUL1, RBX1, SKP1 and FBXO11. Interacts with CIITA. As to expression, at 9.5 dpc and 10.5 dpc, expression is restricted to developing heart tissue. By 11.5 dpc and 12.5 dpc, detected in liver and subsequently in muscle by 13.5 dpc. At 14.5 dpc, still detected in heart, liver and muscle and also in the developing secondary palate including the nasal, medial and oral epithelia of the palatal shelves. At 15.5 dpc and 16.5 dpc, expressed in lung, kidney, heart, liver, muscle and adrenal gland. At this time, fusion of the palate shelves has occurred, with expression confined to the nasal and oral epithelia. At 17.5 dpc, expression in the lung is confined to bronchial epithelial cells and is evident in bone marrow, skin, tissue macrophages, osteoblasts, kidney, liver and spleen. At 18.5 dpc, expressed in bone marrow, liver, kidney and muscle but decreases in heart and lung. At this time, first detected in the middle ear epithelium. At the newborn stage, expression is strong in the middle ear where it is confined to mucin-secreting cells, as well as persisting in bone marrow, kidney and liver. Middle ear expression persists in postnatal head tissue at 4 and 13 days after birth and has declined by 21 days after birth. In the adult, expression is seen in alveolar macrophages of the lung, glomeruli and collecting tubules of the kidney, midbrain, heart and muscle.

The protein localises to the nucleus. Its subcellular location is the chromosome. It functions in the pathway protein modification; protein ubiquitination. Substrate recognition component of a SCF (SKP1-CUL1-F-box protein) E3 ubiquitin-protein ligase complex which mediates the ubiquitination and subsequent proteasomal degradation of target proteins, such as DTL/CDT2, BCL6, SNAI1 and PRDM1/BLIMP1. The SCF(FBXO11) complex mediates ubiquitination and degradation of BCL6, thereby playing a role in the germinal center B-cells terminal differentiation toward memory B-cells and plasma cells. The SCF(FBXO11) complex also mediates ubiquitination and degradation of DTL, an important step for the regulation of TGF-beta signaling, cell migration and the timing of the cell-cycle progression and exit. The SCF(FBXO11) complex also catalyzes ubiquitination and degradation of GSK3B-phosphorylated SNAI1. Binds to and neddylates phosphorylated p53/TP53, inhibiting its transcriptional activity. Plays a role in the regulatiom of erythropoiesis but not myelopoiesis or megakaryopoiesis. Mechanistically, activates erythroid genes by mediating the degradation of BAHD1, a heterochromatin-associated protein that recruits corepressors to H3K27me3 marks. Participates in macrophage cell death and inflammation in response to bacterial toxins by regulating the expression of complement 5a receptor 1/C5AR1 and IL-1beta. Acts as a critical regulator to determine the level of MHC-II by mediating the recognition of degron at the P/S/T domain of CIITA leading to its ubiquitination and subsequent degradation via the proteasome. Participates in the antiviral repsonse by initiating the activation of TBK1-IRF3-IFN-I axis. Mediates the 'Lys-63'-linked ubiquitination of TRAF3 to strengthen the interaction between TRAF3 and TBK1. This chain is F-box only protein 11, found in Mus musculus (Mouse).